Reading from the N-terminus, the 414-residue chain is Enolase (414 aa).

A (2R)-2-phosphoglycerate-binding site is contributed by Q162. The Proton donor role is filled by E204. Residues D239, E280, and D307 each coordinate Mg(2+). Residues K332, R361, S362, and K383 each contribute to the (2R)-2-phosphoglycerate site. Residue K332 is the Proton acceptor of the active site.

Belongs to the enolase family. It depends on Mg(2+) as a cofactor.

Its subcellular location is the cytoplasm. It localises to the secreted. The protein resides in the cell surface. The enzyme catalyses (2R)-2-phosphoglycerate = phosphoenolpyruvate + H2O. It participates in carbohydrate degradation; glycolysis; pyruvate from D-glyceraldehyde 3-phosphate: step 4/5. Catalyzes the reversible conversion of 2-phosphoglycerate (2-PG) into phosphoenolpyruvate (PEP). It is essential for the degradation of carbohydrates via glycolysis. This Campylobacter lari (strain RM2100 / D67 / ATCC BAA-1060) protein is Enolase.